The chain runs to 98 residues: Protein Frey 1 (98 aa).

A helical transmembrane segment spans residues 13–29 (AGLSLFLHLILAVALLR). The segment at 60–87 (YGILPKHPRPRGPRPLLSRAQQRKRDGP) is disordered.

Interacts with SPPL2C (via active sites); the interaction stabilizes FREY1 protein and inhibits SPPL2C proteolytic activity. Interacts with IZUMO1; the interaction retains IZUMO1 at the endoplasmic reticulum membrane and coordinates IZUMO1 complex assembly.

It localises to the endoplasmic reticulum membrane. Functionally, key regulator for male fertility expressed transiently in round spermatids where it recruits IZUMO1 at the endoplasmic reticulum (ER) membrane and coordinates the oolemmal binding multimeric complex (IZUMO1 complex) assembly. Upon complete assembly of the IZUMO1 complex, its ER retention is released, facilitating IZUMO1 complex export to the acrosome. Through the interaction with SPPL2C, inhibits its intramembrane protease activity directly accessing the catalytic center of an I-CLiP. The protein is Protein Frey 1 of Homo sapiens (Human).